Here is a 370-residue protein sequence, read N- to C-terminus: ADP-ribosylation factor-like protein 13B (370 aa).

S-palmitoyl cysteine attachment occurs at residues cysteine 12, cysteine 13, cysteine 14, and cysteine 15. Residues 31–38 (GIGSAGKT), 75–79 (DVGGD), and 134–137 (NNQN) contribute to the GTP site. Lysine 239 participates in a covalent cross-link: Glycyl lysine isopeptide (Lys-Gly) (interchain with G-Cter in SUMO). Residues 255–331 (RNQPPVQPPI…PVSPESNSVK (77 aa)) form a disordered region. Positions 259–271 (PVQPPIPPDPPSD) are enriched in pro residues. 2 stretches are compositionally biased toward polar residues: residues 287–303 (LASSTIPSDIIQSTPET) and 314–328 (RISQTSTKPVSPESN). Lysine 331 participates in a covalent cross-link: Glycyl lysine isopeptide (Lys-Gly) (interchain with G-Cter in SUMO). The RVVP region stretch occupies residues 366 to 369 (RVVP).

It belongs to the small GTPase superfamily. Arf family. In terms of assembly, monomer. Post-translationally, sumoylation regulates the targeting of membrane sensory receptors to the cilium. Specifically expressed in ciliated sensory neurons throughout development in both hermaphrodites.

It localises to the cell projection. Its subcellular location is the cilium membrane. Its function is as follows. Cilium-specific protein required to control the microtubule-based, ciliary axoneme structure. Required for normal sensory cilium function. May act by maintaining the association between IFT subcomplexes A and B. The protein is ADP-ribosylation factor-like protein 13B (arl-13) of Caenorhabditis elegans.